Reading from the N-terminus, the 205-residue chain is Non-specific lipid transfer protein GPI-anchored 13 (205 aa).

The N-terminal stretch at 1–24 is a signal peptide; the sequence is MESRKIKVMATAIALIMVAMVVDA. 4 disulfide bridges follow: Cys-36–Cys-77, Cys-46–Cys-61, Cys-62–Cys-104, and Cys-75–Cys-113. 3 N-linked (GlcNAc...) asparagine glycosylation sites follow: Asn-93, Asn-137, and Asn-165. The tract at residues 141–176 is disordered; the sequence is SASAPTGSASEPTSMSSTPGSSAGNNSGRTTSVPGT. Asn-177 carries GPI-anchor amidated asparagine lipidation. A propeptide spans 178-205 (removed in mature form); that stretch reads HAQSFSKQWLGLEVVAHFFVIFYIFILV.

The protein belongs to the plant LTP family. Expressed preferentially in expanding leaves and sepals, restricted to the distal side. Expressed at low levels in roots and stems.

It is found in the cell membrane. In terms of biological role, probable lipid transfer protein. The sequence is that of Non-specific lipid transfer protein GPI-anchored 13 from Arabidopsis thaliana (Mouse-ear cress).